A 390-amino-acid chain; its full sequence is MRYITAGESHGPQLTVILEGVPAGLTLTAEHINKELLRRQKGHGRGRRMQIETDTVEIVSGVRHGMTLGSPITLIVKNDDFKHWTKVMGAEPISEKESKEMKRTITKPRPGHADLNGAIKYGHRDIRNVLERSSARETTVRVAAGAVAKQILKELGVEIAGHVLEIGGVEAKHISNLSIEEIQTITENSPVRCLDKTVEQEMMDAIDNAKSSGDSIGGIVEVIAEGMPIGVGSYVHYDRKLDAKLAGAIMSINAFKGAEIGVGFEAARQPGSKVHDEILWDEEQGYTRKTNNAGGLEGGMTTGMPIVVRGVMKPIPTLYKPLASVDIDTKEAFQASIERSDSCAVPAAGVVAESVVAWELAHALVEQFGKDRMELIQQNITQHNKYAKEF.

NADP(+) contacts are provided by Arg39 and Arg45. Residues 132–134, 253–254, Gly298, 313–317, and Arg339 contribute to the FMN site; these read RSS, NA, and KPIPT.

The protein belongs to the chorismate synthase family. As to quaternary structure, homotetramer. FMNH2 serves as cofactor.

The catalysed reaction is 5-O-(1-carboxyvinyl)-3-phosphoshikimate = chorismate + phosphate. It participates in metabolic intermediate biosynthesis; chorismate biosynthesis; chorismate from D-erythrose 4-phosphate and phosphoenolpyruvate: step 7/7. Functionally, catalyzes the anti-1,4-elimination of the C-3 phosphate and the C-6 proR hydrogen from 5-enolpyruvylshikimate-3-phosphate (EPSP) to yield chorismate, which is the branch point compound that serves as the starting substrate for the three terminal pathways of aromatic amino acid biosynthesis. This reaction introduces a second double bond into the aromatic ring system. This chain is Chorismate synthase 2, found in Bacillus cereus (strain ZK / E33L).